The following is a 37-amino-acid chain: Large ribosomal subunit protein bL36 (37 aa).

The protein belongs to the bacterial ribosomal protein bL36 family.

The sequence is that of Large ribosomal subunit protein bL36 from Nitrosococcus oceani (strain ATCC 19707 / BCRC 17464 / JCM 30415 / NCIMB 11848 / C-107).